A 961-amino-acid chain; its full sequence is Mitogen-activated protein kinase kinase kinase 13-B (961 aa).

A disordered region spans residues 89–115 (RDQDEPENTAPQGSSHSGDGGNNSANE). The segment covering 101–114 (GSSHSGDGGNNSAN) has biased composition (low complexity). A Protein kinase domain is found at 171-412 (ISELQWLGSG…FRQILMHLDI (242 aa)). ATP is bound by residues 177–185 (LGSGAQGAV) and lysine 198. Aspartate 282 functions as the Proton acceptor in the catalytic mechanism. Leucine-zipper stretches follow at residues 436–457 (VKKH…DEEL) and 489–510 (LSSI…EQTV). Residues 460–497 (RRREELRHALDIREHYERKLERANNLYMELSSIMLQLE) are a coiled coil. 3 disordered regions span residues 507-644 (EQTV…ETSQ), 796-874 (TPPA…DVAC), and 933-961 (NAES…SSTW). Residues 563-580 (AEGSAASASPISGSPKTS) are compositionally biased toward low complexity. Residues 586–598 (GRYRSKPRHRRGN) show a composition bias toward basic residues. Low complexity predominate over residues 613-628 (QESPAPSQQSSQHQTP). A compositionally biased stretch (acidic residues) spans 813–826 (DSSEGEEGEVDSEV). The acidic stretch occupies residues 814-827 (SSEGEEGEVDSEVE). Residues 839–854 (STCQSYSTFSSENFSV) are compositionally biased toward polar residues. Residues 934–945 (AESDCDSSEGEC) are compositionally biased toward acidic residues. The span at 949 to 961 (TVRTNNPVNSSTW) shows a compositional bias: polar residues.

The protein belongs to the protein kinase superfamily. Ser/Thr protein kinase family.

The protein localises to the cytoplasm. The protein resides in the membrane. The catalysed reaction is L-seryl-[protein] + ATP = O-phospho-L-seryl-[protein] + ADP + H(+). It catalyses the reaction L-threonyl-[protein] + ATP = O-phospho-L-threonyl-[protein] + ADP + H(+). Functionally, may have a role in the JNK signaling pathway. The protein is Mitogen-activated protein kinase kinase kinase 13-B (map3k13-b) of Xenopus laevis (African clawed frog).